The chain runs to 128 residues: Large ribosomal subunit protein bL12 (128 aa).

It belongs to the bacterial ribosomal protein bL12 family. In terms of assembly, homodimer. Part of the ribosomal stalk of the 50S ribosomal subunit. Forms a multimeric L10(L12)X complex, where L10 forms an elongated spine to which 2 to 4 L12 dimers bind in a sequential fashion. Binds GTP-bound translation factors.

Forms part of the ribosomal stalk which helps the ribosome interact with GTP-bound translation factors. Is thus essential for accurate translation. The sequence is that of Large ribosomal subunit protein bL12 from Aquifex aeolicus (strain VF5).